The primary structure comprises 336 residues: Inositol 2-dehydrogenase (336 aa).

The protein belongs to the Gfo/Idh/MocA family. Homotetramer.

The catalysed reaction is myo-inositol + NAD(+) = scyllo-inosose + NADH + H(+). Involved in the oxidation of myo-inositol (MI) to 2-keto-myo-inositol (2KMI or 2-inosose). The sequence is that of Inositol 2-dehydrogenase from Pseudomonas syringae pv. syringae (strain B728a).